Consider the following 387-residue polypeptide: Oleoyl-12-hydroxylase FAH12 (387 aa).

The segment at 1-34 (MGGGGRMSTVITSNNSEKKGGSSHLKRAPHTKPP) is disordered. 2 helical membrane passes run 61–81 (AYDV…FPYI) and 88–108 (VAWL…WVIG). A Histidine box-1 motif is present at residues 109 to 113 (HECGH). Residues 121–141 (LADDIVGLIVHSALLVPYFSW) form a helical membrane-spanning segment. Positions 145–149 (HRRHH) match the Histidine box-2 motif. Helical transmembrane passes span 183 to 203 (VLTL…FNVS), 229 to 249 (IYIA…ATMA), and 253 to 273 (AWVM…LVMI). Positions 319 to 323 (HVAHH) match the Histidine box-3 motif.

This sequence belongs to the fatty acid desaturase type 1 family. Expressed in seeds. Barely detected in leaves.

It is found in the microsome membrane. The catalysed reaction is a 1-acyl-2-(9Z)-octadecenoyl-sn-glycero-3-phosphocholine + 2 Fe(II)-[cytochrome b5] + O2 + 2 H(+) = a 1-acyl-2-[(R)-12-hydroxyoleoyl]-sn-glycero-3-phosphocholine + 2 Fe(III)-[cytochrome b5] + H2O. It functions in the pathway lipid metabolism; monounsaturated fatty acid biosynthesis. Its activity is regulated as follows. Inhibited by oleoyloxyethyl phosphocholine. In terms of biological role, oleoyl-12-hydroxylase involved in the biosynthesis of ricinoleate (12-hydroxy-cis-9-octadecenoate), the major fatty acid constituent of the oil seeds from castor bean plants. Catalyzes the hydroxylation at the 12-position of 1-acyl-2-oleoyl-sn-glycero-3-phosphocholine (2-oleoyl-PC), which seems to be the actual physiological subtrate. It uses cytochrome b5 as an electron donor. May also be involved in the production of lesquerolic acid (14-hydroxyeicos-cis-ll-enoic acid) in vitro. This is Oleoyl-12-hydroxylase FAH12 from Ricinus communis (Castor bean).